Reading from the N-terminus, the 948-residue chain is PHD finger protein 14 (948 aa).

The tract at residues 22–302 (DYDSSDDSDF…LSQSKSNEDS (281 aa)) is disordered. Phosphoserine is present on residues serine 26 and serine 29. The segment covering 36–47 (ASDSEGSGNGSE) has biased composition (low complexity). Acidic residues predominate over residues 60–71 (DSEENILEEELN). Over residues 72–85 (EDIKVKEEQLKNSA) the composition is skewed to basic and acidic residues. Phosphoserine is present on residues serine 84 and serine 91. Basic and acidic residues-rich tracts occupy residues 95-110 (QLIKMEKKEEEENGER) and 117-139 (KEKEKEKEKEKEKEREKEKEKAT). Low complexity predominate over residues 140-174 (VSENVAASAAATTPATSPPAVNTSPSVPTTTTATE). Serine 196 carries the post-translational modification Phosphoserine. Composition is skewed to acidic residues over residues 199–212 (ELNDMDDYDSEDDN) and 233–256 (DGDNEDDEDEGSGSDEDENDEGND). Tyrosine 206 carries the phosphotyrosine modification. A Phosphoserine modification is found at serine 208. Phosphothreonine is present on threonine 287. The span at 288–297 (NDSLTLSQSK) shows a compositional bias: polar residues. Phosphoserine occurs at positions 290, 294, 298, 302, and 308. A PHD-type 1 zinc finger spans residues 319 to 380 (ILICCVCLGD…PWFCDACKCG (62 aa)). 6 residues coordinate Zn(2+): cysteine 322, cysteine 325, cysteine 339, cysteine 342, histidine 347, and cysteine 350. Serine 359 carries the post-translational modification Phosphoserine. Residues cysteine 374, cysteine 377, cysteine 385, cysteine 388, histidine 405, cysteine 408, cysteine 441, cysteine 444, cysteine 458, cysteine 463, histidine 468, cysteine 471, cysteine 495, and histidine 498 each contribute to the Zn(2+) site. Residues 382–415 (SPSCELCPNQDGIFKETDAGRWVHIVCALYVPGV) form a C2HC pre-PHD-type zinc finger. The PHD-type 2 zinc finger occupies 439–499 (KECSFCEDPR…PFFAYCKQHA (61 aa)). A Phosphoserine modification is found at serine 530. The stretch at 630–678 (MIQIQENMAEQKNIKDKLENEQEKLHVEYNKLCESLEELQNLNGKLRSE) forms a coiled coil. Residue glutamate 648 forms a Glycyl lysine isopeptide (Lys-Gly) (interchain with G-Cter in SUMO2) linkage. The residue at position 651 (glutamine 651) is a Phosphoserine. Residues 725 to 779 (LYSCGICKKNHDQHLLLLCDTCKLHYHLGCLDPPLTRMPRKTKNSYWQCSECDQA) form a PHD-type 3 zinc finger. Residues cysteine 728, cysteine 731, cysteine 743, cysteine 746, histidine 751, cysteine 754, cysteine 773, and cysteine 776 each contribute to the Zn(2+) site. Residues serine 781, serine 782, and serine 835 each carry the phosphoserine modification. Residues 811 to 862 (VPQDVPPEPKKIPIRNTRTRGRKRSFVPEEEKHEERVPRERRQRQSVLQKKP) form a disordered region. The span at 836 to 850 (FVPEEEKHEERVPRE) shows a compositional bias: basic and acidic residues. The segment at 868-921 (RTECATCKGTGDNENLVRCDECRLCYHFGCLDPPLKKSPKQTGYGWICQECDSS) adopts a PHD-type 4 zinc-finger fold. Zn(2+) is bound by residues cysteine 871, cysteine 874, cysteine 886, cysteine 889, histidine 894, cysteine 897, cysteine 915, and cysteine 918. A disordered region spans residues 920 to 948 (SSSSKEDENEAERKNISQELNMEQKNPKK). Residues 922 to 935 (SSKEDENEAERKNI) are compositionally biased toward basic and acidic residues. The segment covering 936-948 (SQELNMEQKNPKK) has biased composition (polar residues).

It localises to the nucleus. The protein localises to the chromosome. Its subcellular location is the cytoplasm. Its function is as follows. Histone-binding protein. Binds preferentially to unmodified histone H3 but can also bind to a lesser extent to histone H3 trimethylated at 'Lys-9' (H3K9me3) as well as to histone H3 monomethylated at 'Lys-27' (H3K27ac) and trimethylated at 'Lys-27' (H3K27me3). Represses PDGFRA expression, thus playing a role in regulation of mesenchymal cell proliferation. Suppresses the expression of CDKN1A/p21 by reducing the level of trimethylation of histone H3 'Lys-4', leading to enhanced proliferation of germinal center B cells. This chain is PHD finger protein 14 (PHF14), found in Homo sapiens (Human).